We begin with the raw amino-acid sequence, 65 residues long: Large ribosomal subunit protein bL35 (65 aa).

The segment at Met1–Phe22 is disordered. Over residues Ala10–Phe22 the composition is skewed to basic residues.

It belongs to the bacterial ribosomal protein bL35 family.

The polypeptide is Large ribosomal subunit protein bL35 (Buchnera aphidicola subsp. Schizaphis graminum (strain Sg)).